Here is a 238-residue protein sequence, read N- to C-terminus: Ribosomal RNA small subunit methyltransferase G (238 aa).

Residues Gly-77, Phe-82, 128–129 (AE), and Arg-147 contribute to the S-adenosyl-L-methionine site.

It belongs to the methyltransferase superfamily. RNA methyltransferase RsmG family.

The protein localises to the cytoplasm. In terms of biological role, specifically methylates the N7 position of guanine in position 535 of 16S rRNA. The protein is Ribosomal RNA small subunit methyltransferase G of Listeria innocua serovar 6a (strain ATCC BAA-680 / CLIP 11262).